Here is a 697-residue protein sequence, read N- to C-terminus: Pentatricopeptide repeat-containing protein At5g46460, mitochondrial (697 aa).

A mitochondrion-targeting transit peptide spans 1-36 (MWSRAIFQRFRFRAFSISHVIHGKCYRSFSVTVEFQ). PPR repeat units lie at residues 39–64 (EVLICNHLLSRRIDEAREVFNQVPSP), 65–95 (HVSLYTKMITGYTRSNRLVDALNLFDEMPVR), 96–130 (DVVSWNSMISGCVECGDMNTAVKLFDEMPERSVVS), 131–157 (WTAMVNGCFRSGKVDQAERLFYQMPVK), 158–192 (DTAAWNSMVHGYLQFGKVDDALKLFKQMPGKNVIS), 193–223 (WTTMICGLDQNERSGEALDLFKNMLRCCIKS), 224–258 (TSRPFTCVITACANAPAFHMGIQVHGLIIKLGFLY), 259–289 (EEYVSASLITFYANCKRIGDSRKVFDEKVHE), 290–324 (QVAVWTALLSGYSLNKKHEDALSIFSGMLRNSILP), 325–359 (NQSTFASGLNSCSALGTLDWGKEMHGVAVKLGLET), 360–390 (DAFVGNSLVVMYSDSGNVNDAVSVFIKIFKK), 391–425 (SIVSWNSIIVGCAQHGRGKWAFVIFGQMIRLNKEP), 426–456 (DEITFTGLLSACSHCGFLEKGRKLFYYMSSG), and 463–497 (KIQHYTCMVDILGRCGKLKEAEELIERMVVKPNEM). The type E motif stretch occupies residues 498-573 (VWLALLSACR…KPGSSWVVIR (76 aa)). Residues 574–602 (GKKHEFFSGDQPHCSRIYEKLEFLREKLK) are type E(+) motif. The tract at residues 603–697 (ELGYAPDYRS…NGTCSCGDYW (95 aa)) is type DYW motif.

The protein belongs to the PPR family. PCMP-H subfamily.

It localises to the mitochondrion. This Arabidopsis thaliana (Mouse-ear cress) protein is Pentatricopeptide repeat-containing protein At5g46460, mitochondrial (PCMP-H49).